The chain runs to 341 residues: Phosphoribosylformylglycinamidine cyclo-ligase (341 aa).

Belongs to the AIR synthase family.

The protein resides in the cytoplasm. The catalysed reaction is 2-formamido-N(1)-(5-O-phospho-beta-D-ribosyl)acetamidine + ATP = 5-amino-1-(5-phospho-beta-D-ribosyl)imidazole + ADP + phosphate + H(+). It participates in purine metabolism; IMP biosynthesis via de novo pathway; 5-amino-1-(5-phospho-D-ribosyl)imidazole from N(2)-formyl-N(1)-(5-phospho-D-ribosyl)glycinamide: step 2/2. In Caldicellulosiruptor saccharolyticus (strain ATCC 43494 / DSM 8903 / Tp8T 6331), this protein is Phosphoribosylformylglycinamidine cyclo-ligase.